Consider the following 392-residue polypeptide: Histidinol-phosphate aminotransferase (392 aa).

A disordered region spans residues 1–24 (MSAVLKDPIPAPGRPESTRPEPRP). The residue at position 236 (lysine 236) is an N6-(pyridoxal phosphate)lysine.

It belongs to the class-II pyridoxal-phosphate-dependent aminotransferase family. Histidinol-phosphate aminotransferase subfamily. In terms of assembly, homodimer. It depends on pyridoxal 5'-phosphate as a cofactor.

It catalyses the reaction L-histidinol phosphate + 2-oxoglutarate = 3-(imidazol-4-yl)-2-oxopropyl phosphate + L-glutamate. The protein operates within amino-acid biosynthesis; L-histidine biosynthesis; L-histidine from 5-phospho-alpha-D-ribose 1-diphosphate: step 7/9. The polypeptide is Histidinol-phosphate aminotransferase (Xanthobacter autotrophicus (strain ATCC BAA-1158 / Py2)).